A 204-amino-acid polypeptide reads, in one-letter code: FMN-dependent NADH:quinone oxidoreductase (204 aa).

FMN contacts are provided by residues S10, 16-18, and 96-99; these read SIS and MYNF.

This sequence belongs to the azoreductase type 1 family. Homodimer. FMN is required as a cofactor.

The enzyme catalyses 2 a quinone + NADH + H(+) = 2 a 1,4-benzosemiquinone + NAD(+). The catalysed reaction is N,N-dimethyl-1,4-phenylenediamine + anthranilate + 2 NAD(+) = 2-(4-dimethylaminophenyl)diazenylbenzoate + 2 NADH + 2 H(+). Its function is as follows. Quinone reductase that provides resistance to thiol-specific stress caused by electrophilic quinones. In terms of biological role, also exhibits azoreductase activity. Catalyzes the reductive cleavage of the azo bond in aromatic azo compounds to the corresponding amines. The sequence is that of FMN-dependent NADH:quinone oxidoreductase from Herminiimonas arsenicoxydans.